The following is a 1396-amino-acid chain: uncharacterized protein (1396 aa).

Residue 88 to 95 participates in ATP binding; sequence AYKKWGRS. 2 disordered regions span residues 146–165 and 198–388; these read EKIH…LSPT and KPCS…VKDL. The segment covering 198–221 has biased composition (low complexity); the sequence is KPCSYSSSSSSSTVPPASTDTSSP. Basic and acidic residues predominate over residues 242-268; the sequence is MHEKAQSRSRHEKESKLSSSTIEEKPA. The span at 286 to 300 shows a compositional bias: low complexity; the sequence is SWSSGSSEAGSSSSG. The span at 312-327 shows a compositional bias: basic residues; the sequence is VKVRHKAREIRNRKGR. Phosphoserine is present on residues Ser-817 and Ser-1083. The disordered stretch occupies residues 1113–1137; that stretch reads PISASELSPGGGSESEFESEKDEAS. Phosphoserine occurs at positions 1197 and 1339. Positions 1347–1396 are disordered; that stretch reads TGERGSETKPNGLHRKMCSSASSDTGDTGSEAGGEWVGPSREELFSRTHL. The span at 1365-1376 shows a compositional bias: low complexity; the sequence is SSASSDTGDTGS. The span at 1386–1396 shows a compositional bias: basic and acidic residues; it reads SREELFSRTHL.

This is an uncharacterized protein from Mus musculus (Mouse).